A 153-amino-acid polypeptide reads, in one-letter code: Alpha-amylase inhibitor 0.28 (153 aa).

The N-terminal stretch at 1–30 (MWMKTVFWGLLVFMLVATTMAVEYGARSHN) is a signal peptide. 5 disulfide bridges follow: Cys37–Cys84, Cys51–Cys72, Cys59–Cys112, Cys73–Cys128, and Cys86–Cys143.

It belongs to the protease inhibitor I6 (cereal trypsin/alpha-amylase inhibitor) family. Monomer. Post-translationally, the disulfide bonds are essential for the inhibitor activity. In terms of tissue distribution, endosperm.

Its subcellular location is the secreted. Functionally, alpha-amylase inhibitor. The protein is Alpha-amylase inhibitor 0.28 (IMA1) of Triticum aestivum (Wheat).